A 291-amino-acid polypeptide reads, in one-letter code: N-acetylmannosamine kinase (291 aa).

Residues 5–12 (AIDIGGTK) and 132–139 (GVGGGVVS) contribute to the ATP site. Zn(2+) contacts are provided by His156, Cys166, Cys168, and Cys173.

Belongs to the ROK (NagC/XylR) family. NanK subfamily. Homodimer.

The catalysed reaction is an N-acyl-D-mannosamine + ATP = an N-acyl-D-mannosamine 6-phosphate + ADP + H(+). Its pathway is amino-sugar metabolism; N-acetylneuraminate degradation; D-fructose 6-phosphate from N-acetylneuraminate: step 2/5. In terms of biological role, catalyzes the phosphorylation of N-acetylmannosamine (ManNAc) to ManNAc-6-P. In Escherichia coli O6:K15:H31 (strain 536 / UPEC), this protein is N-acetylmannosamine kinase.